A 146-amino-acid chain; its full sequence is Large ribosomal subunit protein uL15 (146 aa).

Basic and acidic residues predominate over residues 1–18 (MKLHELKPTPGSRHERNR). A disordered region spans residues 1–69 (MKLHELKPTP…RLPKRGFNNP (69 aa)). The segment covering 42–52 (SGGGVRPGFEG) has biased composition (gly residues).

Belongs to the universal ribosomal protein uL15 family. In terms of assembly, part of the 50S ribosomal subunit.

Binds to the 23S rRNA. This chain is Large ribosomal subunit protein uL15, found in Exiguobacterium sp. (strain ATCC BAA-1283 / AT1b).